The following is a 296-amino-acid chain: Protein FAM110A (296 aa).

Disordered stretches follow at residues 61–97 (NTRQ…PCSG) and 117–192 (PVSP…KSDL). 2 stretches are compositionally biased toward pro residues: residues 139 to 148 (PATPPRPPPS) and 161 to 170 (PASPARPYPS).

Belongs to the FAM110 family. May interact with CSPP1.

It localises to the cytoplasm. The protein resides in the cytoskeleton. It is found in the microtubule organizing center. Its subcellular location is the centrosome. The protein localises to the spindle pole. The sequence is that of Protein FAM110A (Fam110a) from Mus musculus (Mouse).